Reading from the N-terminus, the 336-residue chain is DNA-directed RNA polymerase subunit alpha (336 aa).

An alpha N-terminal domain (alpha-NTD) region spans residues 1 to 233 (MSSNSFLTPR…EQFSFFADLE (233 aa)). Residues 247–336 (IDPILLRPVD…YIKEPGHASS (90 aa)) are alpha C-terminal domain (alpha-CTD).

The protein belongs to the RNA polymerase alpha chain family. In terms of assembly, homodimer. The RNAP catalytic core consists of 2 alpha, 1 beta, 1 beta' and 1 omega subunit. When a sigma factor is associated with the core the holoenzyme is formed, which can initiate transcription.

The catalysed reaction is RNA(n) + a ribonucleoside 5'-triphosphate = RNA(n+1) + diphosphate. In terms of biological role, DNA-dependent RNA polymerase catalyzes the transcription of DNA into RNA using the four ribonucleoside triphosphates as substrates. This is DNA-directed RNA polymerase subunit alpha from Nitrosomonas europaea (strain ATCC 19718 / CIP 103999 / KCTC 2705 / NBRC 14298).